A 166-amino-acid polypeptide reads, in one-letter code: MFNDIGALELLTLGVLAVLVFGPDKLPKLIQDVTRTIRKIREFSDSAKEDIRSELGPQFKDFEFEDLNPKTFVRKQLMDGNDDLGLKEIRESFDLRKEISDVTDAVNGRTPAASDTANSAVNGSAGAAADGVTTSLTKTGETTPDLLKKAPQQAQPERPPFDADAT.

Residues 2–22 (FNDIGALELLTLGVLAVLVFG) traverse the membrane as a helical segment. The tract at residues 110–166 (TPAASDTANSAVNGSAGAAADGVTTSLTKTGETTPDLLKKAPQQAQPERPPFDADAT) is disordered. Residues 117-129 (ANSAVNGSAGAAA) are compositionally biased toward low complexity. Polar residues predominate over residues 132 to 142 (VTTSLTKTGET).

Belongs to the TatB family. The Tat system comprises two distinct complexes: a TatABC complex, containing multiple copies of TatA, TatB and TatC subunits, and a separate TatA complex, containing only TatA subunits. Substrates initially bind to the TatABC complex, which probably triggers association of the separate TatA complex to form the active translocon.

Its subcellular location is the cell membrane. In terms of biological role, part of the twin-arginine translocation (Tat) system that transports large folded proteins containing a characteristic twin-arginine motif in their signal peptide across membranes. Together with TatC, TatB is part of a receptor directly interacting with Tat signal peptides. TatB may form an oligomeric binding site that transiently accommodates folded Tat precursor proteins before their translocation. This is Sec-independent protein translocase protein TatB from Streptomyces griseus subsp. griseus (strain JCM 4626 / CBS 651.72 / NBRC 13350 / KCC S-0626 / ISP 5235).